The primary structure comprises 400 residues: Probable cysteine protease atg4 (400 aa).

The active-site Nucleophile is C131. Catalysis depends on residues D305 and H307.

Belongs to the peptidase C54 family.

The protein resides in the cytoplasm. It localises to the nucleus. The protein localises to the preautophagosomal structure. It carries out the reaction [protein]-C-terminal L-amino acid-glycyl-phosphatidylethanolamide + H2O = [protein]-C-terminal L-amino acid-glycine + a 1,2-diacyl-sn-glycero-3-phosphoethanolamine. Functionally, cysteine protease that plays a key role in cytoplasm to vacuole transport (Cvt) and autophagy by mediating both proteolytic activation and delipidation of ATG8. Required for selective autophagic degradation of the nucleus (nucleophagy) as well as for mitophagy which contributes to regulate mitochondrial quantity and quality by eliminating the mitochondria to a basal level to fulfill cellular energy requirements and preventing excess ROS production. The protease activity is required for proteolytic activation of ATG8: cleaves the C-terminal amino acid of ATG8 to reveal a C-terminal glycine. ATG8 ubiquitin-like activity requires the exposure of the glycine at the C-terminus for its conjugation to phosphatidylethanolamine (PE) and its insertion to membranes, which is necessary for autophagy. The ATG8-PE conjugate mediates tethering between adjacent membranes and stimulates membrane hemifusion, leading to expansion of the autophagosomal membrane during autophagy. In addition to the protease activity, also catalyzes deconjugation of PE-conjugated forms of ATG8 during macroautophagy: ATG8 delipidation is required to release the protein from membranes, which facilitates multiple events during macroautophagy, and especially for efficient autophagosome biogenesis, the assembly of ATG9-containing tubulovesicular clusters into phagophores/autophagosomes, and for the disassembly of PAS-associated ATG components. ATG8 delipidation by ATG4 also recycles ATG8-PE generated on inappropriate membranes to maintain a reservoir of unlipidated ATG8 that is required for autophagosome formation at the PAS. This Aspergillus clavatus (strain ATCC 1007 / CBS 513.65 / DSM 816 / NCTC 3887 / NRRL 1 / QM 1276 / 107) protein is Probable cysteine protease atg4 (atg4).